Reading from the N-terminus, the 96-residue chain is Co-chaperonin GroES (96 aa).

The protein belongs to the GroES chaperonin family. In terms of assembly, heptamer of 7 subunits arranged in a ring. Interacts with the chaperonin GroEL.

The protein resides in the cytoplasm. In terms of biological role, together with the chaperonin GroEL, plays an essential role in assisting protein folding. The GroEL-GroES system forms a nano-cage that allows encapsulation of the non-native substrate proteins and provides a physical environment optimized to promote and accelerate protein folding. GroES binds to the apical surface of the GroEL ring, thereby capping the opening of the GroEL channel. In Leptospira borgpetersenii serovar Hardjo-bovis (strain JB197), this protein is Co-chaperonin GroES.